The primary structure comprises 198 residues: Golgi to ER traffic protein 1 (198 aa).

Over 1–6 the chain is Lumenal; that stretch reads MDPFSI. The chain crosses the membrane as a helical span at residues 7–26; the sequence is LLTLTLIILAQNAVRIVGKS. Residues 27–110 lie on the Cytoplasmic side of the membrane; that stretch reads QIHQSIWNLY…AIEKYLGLAI (84 aa). Positions 73–106 form a coiled coil; it reads KWTKLNRKYDQLQTEIKAVSDQVSQQQQAIEKYL. Residues 111-131 form a helical membrane-spanning segment; sequence SVTTTLPLWLFRFKYRKQPLF. The Lumenal segment spans residues 132–155; sequence YFPKDTFPSYLEWILSFPSVPQGS. Residues 156-172 form a helical membrane-spanning segment; sequence IGIMFWILLLNKFVSNL. At 173–198 the chain is on the cytoplasmic side; that stretch reads EFIVKTFSTKVEKPVPIVKVEDLSPK.

Belongs to the WRB/GET1 family. Component of the Golgi to ER traffic (GET) complex, which is composed of GET1, GET2 and GET3. Within the complex, GET1 and GET2 form a heterotetramer which is stabilized by phosphatidylinositol binding and which binds to the GET3 homodimer.

The protein localises to the endoplasmic reticulum membrane. The protein resides in the golgi apparatus membrane. Functionally, required for the post-translational delivery of tail-anchored (TA) proteins to the endoplasmic reticulum. Together with GET2, acts as a membrane receptor for soluble GET3, which recognizes and selectively binds the transmembrane domain of TA proteins in the cytosol. The GET complex cooperates with the HDEL receptor ERD2 to mediate the ATP-dependent retrieval of resident ER proteins that contain a C-terminal H-D-E-L retention signal from the Golgi to the ER. The chain is Golgi to ER traffic protein 1 from Komagataella phaffii (strain GS115 / ATCC 20864) (Yeast).